A 317-amino-acid polypeptide reads, in one-letter code: Ribosomal protein L11 methyltransferase (317 aa).

Residues Thr158, Gly179, Asp201, and Asn244 each contribute to the S-adenosyl-L-methionine site.

It belongs to the methyltransferase superfamily. PrmA family.

It is found in the cytoplasm. The enzyme catalyses L-lysyl-[protein] + 3 S-adenosyl-L-methionine = N(6),N(6),N(6)-trimethyl-L-lysyl-[protein] + 3 S-adenosyl-L-homocysteine + 3 H(+). Its function is as follows. Methylates ribosomal protein L11. This Streptococcus pyogenes serotype M49 (strain NZ131) protein is Ribosomal protein L11 methyltransferase.